Here is a 232-residue protein sequence, read N- to C-terminus: Ribonuclease 3 (232 aa).

The 128-residue stretch at F6 to G133 folds into the RNase III domain. A Mg(2+)-binding site is contributed by E46. Residue D50 is part of the active site. Mg(2+) is bound by residues D119 and E122. The active site involves E122. The region spanning D160–K229 is the DRBM domain.

Belongs to the ribonuclease III family. Homodimer. Requires Mg(2+) as cofactor.

The protein localises to the cytoplasm. The enzyme catalyses Endonucleolytic cleavage to 5'-phosphomonoester.. Functionally, digests double-stranded RNA. Involved in the processing of primary rRNA transcript to yield the immediate precursors to the large and small rRNAs (23S and 16S). Processes some mRNAs, and tRNAs when they are encoded in the rRNA operon. Processes pre-crRNA and tracrRNA of type II CRISPR loci if present in the organism. This Clostridium botulinum (strain Eklund 17B / Type B) protein is Ribonuclease 3.